Here is a 364-residue protein sequence, read N- to C-terminus: Popeye domain-containing protein 2 (364 aa).

Asn4 carries an N-linked (GlcNAc...) asparagine glycan. Helical transmembrane passes span 37–57 and 77–97; these read LLLG…FGFL and IVLW…HLVY. Residues 276–333 are disordered; the sequence is ADAGPESEKGDEEVCEPAVSPPQATPTSLQQTPPCSTPPATTNFPAPPTRARLSRPDS. Residues 300–309 show a composition bias toward polar residues; it reads TPTSLQQTPP. Thr361 is subject to Phosphothreonine.

The protein belongs to the popeye family. Expressed predominantly in the heart and in the skeletal muscle.

Its subcellular location is the membrane. It is found in the cell membrane. The protein localises to the sarcolemma. Functionally, important for the maintenance of cardiac function. Plays a regulatory function in heart rate dynamics mediated, at least in part, through cAMP-binding and, probably, by increasing cell surface expression of the potassium channel KCNK2 and enhancing current density. This is Popeye domain-containing protein 2 (POPDC2) from Homo sapiens (Human).